The chain runs to 42 residues: DRDSCVDKSRCSKYGYYQECQDCCKKAGHNGGTCMFFKCKCA.

4 disulfides stabilise this stretch: Cys5–Cys23, Cys11–Cys34, Cys20–Cys39, and Cys24–Cys41.

The protein belongs to the ergtoxin family. Gamma-KTx 1 subfamily. Expressed by the venom gland.

The protein localises to the secreted. Its function is as follows. Blocks Kv11/ERG potassium channels. The protein is Potassium channel toxin gamma-KTx 1.5 of Centruroides limpidus (Mexican scorpion).